The chain runs to 1406 residues: Protein FAM135B (1406 aa).

Disordered stretches follow at residues 519–548 (WTGQ…DGQA) and 770–820 (SVSA…GDSG). 2 positions are modified to phosphoserine: S777 and S778. Residues 804-816 (KSQGSPGSCSQLC) show a composition bias toward polar residues.

It belongs to the FAM135 family.

The chain is Protein FAM135B (FAM135B) from Homo sapiens (Human).